The sequence spans 440 residues: Serine/threonine-protein kinase STK11 (440 aa).

The 261-residue stretch at 49 to 309 (YLMGDLLGEG…IQQIRQHNWF (261 aa)) folds into the Protein kinase domain. ATP-binding positions include 55 to 63 (LGEGSYGKV) and lysine 78. The active-site Proton acceptor is aspartate 176. Residues threonine 336 and threonine 365 each carry the phosphothreonine; by autocatalysis modification. The disordered stretch occupies residues 370–440 (VPGQVPEEEA…IRKLSTCKQQ (71 aa)). Residues 430–440 (KIRKLSTCKQQ) are compositionally biased toward basic residues. Phosphoserine; by PKA is present on serine 435.

This sequence belongs to the protein kinase superfamily. CAMK Ser/Thr protein kinase family. LKB1 subfamily. As to quaternary structure, catalytic component of a trimeric complex composed of STK11/LKB1, STRAD (STRADA or STRADB) and CAB39/MO25 (CAB39/MO25alpha or CAB39L/MO25beta). The cofactor is Mg(2+). It depends on Mn(2+) as a cofactor. Ubiquitously expressed in all tissues tested. High levels were observed in duodenum and skeletal muscle, lower levels in liver and pancreas.

The protein resides in the nucleus. It is found in the cytoplasm. It catalyses the reaction L-seryl-[protein] + ATP = O-phospho-L-seryl-[protein] + ADP + H(+). The enzyme catalyses L-threonyl-[protein] + ATP = O-phospho-L-threonyl-[protein] + ADP + H(+). In terms of biological role, tumor suppressor serine/threonine-protein kinase that controls the activity of AMP-activated protein kinase (AMPK) family members, thereby playing a role in various processes such as cell metabolism, cell polarity, apoptosis and DNA damage response. Acts by phosphorylating the T-loop of AMPK family proteins, leading to promote their activity. The sequence is that of Serine/threonine-protein kinase STK11 from Gallus gallus (Chicken).